Here is a 98-residue protein sequence, read N- to C-terminus: NADH-ubiquinone oxidoreductase chain 4L (98 aa).

The next 3 helical transmembrane spans lie at 1–21 (MSMV…GLLM), 29–49 (SLLC…VTIL), and 61–81 (IILL…LVMV).

It belongs to the complex I subunit 4L family. As to quaternary structure, core subunit of respiratory chain NADH dehydrogenase (Complex I) which is composed of 45 different subunits.

The protein localises to the mitochondrion inner membrane. It catalyses the reaction a ubiquinone + NADH + 5 H(+)(in) = a ubiquinol + NAD(+) + 4 H(+)(out). Functionally, core subunit of the mitochondrial membrane respiratory chain NADH dehydrogenase (Complex I) which catalyzes electron transfer from NADH through the respiratory chain, using ubiquinone as an electron acceptor. Part of the enzyme membrane arm which is embedded in the lipid bilayer and involved in proton translocation. The polypeptide is NADH-ubiquinone oxidoreductase chain 4L (MT-ND4L) (Callorhinus ursinus (Northern fur seal)).